The chain runs to 439 residues: Lipase 1 (439 aa).

The signal sequence occupies residues 1–24; the sequence is MRCSLRMQLLLLLGLCVFISRIQG. The disordered stretch occupies residues 28–60; sequence GGEEDEEDEEEEEEEEESVEDETPEDRLQRKNI. The segment covering 29-51 has biased composition (acidic residues); sequence GEEDEEDEEEEEEEEESVEDETP. Asn124 and Asn151 each carry an N-linked (GlcNAc...) asparagine glycan. Ser197 (charge relay system) is an active-site residue. Asn346 and Asn379 each carry an N-linked (GlcNAc...) asparagine glycan. His393 functions as the Charge relay system in the catalytic mechanism. An N-linked (GlcNAc...) asparagine glycan is attached at Asn426.

This sequence belongs to the AB hydrolase superfamily. Lipase family. As to expression, in 14 hours embryos expression is seen in the foregut/midgut boundary.

The protein resides in the secreted. Its function is as follows. Could be a digestive enzyme. The polypeptide is Lipase 1 (Lip1) (Drosophila melanogaster (Fruit fly)).